The primary structure comprises 391 residues: Matrix metalloproteinase-23 (391 aa).

Residues 1-18 (MGCRACLRPEASGAVQGR) lie on the Cytoplasmic side of the membrane. A propeptide spanning residues 1–79 (MGCRACLRPE…LTMSVTRRRR (79 aa)) is cleaved from the precursor. A helical membrane pass occupies residues 19–39 (WLGAALSGLCLLSALALLEWL). The Lumenal segment spans residues 40–391 (GAPTETAWRA…TYSWRVRVRN (352 aa)). Asparagine 93 and asparagine 149 each carry an N-linked (GlcNAc...) asparagine glycan. Residue histidine 212 coordinates Zn(2+). Residue glutamate 213 is part of the active site. Residues histidine 216 and histidine 222 each coordinate Zn(2+). The N-linked (GlcNAc...) asparagine glycan is linked to asparagine 233. The region spanning 256–290 (CLDRIFVCASWARKGFCDVRQRLMKRLCPRSCDFC) is the ShKT domain. 3 cysteine pairs are disulfide-bonded: cysteine 256/cysteine 290, cysteine 263/cysteine 283, and cysteine 272/cysteine 287. The 86-residue stretch at 298 to 383 (VATTTSPTRT…RRHQRVLSTY (86 aa)) folds into the Ig-like C2-type domain. N-linked (GlcNAc...) asparagine glycosylation occurs at asparagine 317. Cysteines 322 and 371 form a disulfide.

This sequence belongs to the peptidase M10A family. Requires Zn(2+) as cofactor. In terms of processing, N-glycosylated. Proteolytic cleavage might yield an active form. Expressed at relatively high level in heart, lung and spleen. Not detected in brain, liver, skeletal muscle, kidney and testis.

The protein resides in the endoplasmic reticulum membrane. The protein localises to the membrane. Its activity is regulated as follows. Inhibited by TIMP2. Protease. May regulate the surface expression of some potassium channels by retaining them in the endoplasmic reticulum. In Mus musculus (Mouse), this protein is Matrix metalloproteinase-23 (Mmp23).